Consider the following 329-residue polypeptide: Acetyl-coenzyme A carboxylase carboxyl transferase subunit alpha (329 aa).

The CoA carboxyltransferase C-terminal domain maps to 40–294 (QLESLASRRR…RAALERHLGE (255 aa)).

It belongs to the AccA family. In terms of assembly, acetyl-CoA carboxylase is a heterohexamer composed of biotin carboxyl carrier protein (AccB), biotin carboxylase (AccC) and two subunits each of ACCase subunit alpha (AccA) and ACCase subunit beta (AccD).

The protein resides in the cytoplasm. The enzyme catalyses N(6)-carboxybiotinyl-L-lysyl-[protein] + acetyl-CoA = N(6)-biotinyl-L-lysyl-[protein] + malonyl-CoA. It participates in lipid metabolism; malonyl-CoA biosynthesis; malonyl-CoA from acetyl-CoA: step 1/1. In terms of biological role, component of the acetyl coenzyme A carboxylase (ACC) complex. First, biotin carboxylase catalyzes the carboxylation of biotin on its carrier protein (BCCP) and then the CO(2) group is transferred by the carboxyltransferase to acetyl-CoA to form malonyl-CoA. In Synechococcus sp. (strain CC9902), this protein is Acetyl-coenzyme A carboxylase carboxyl transferase subunit alpha.